We begin with the raw amino-acid sequence, 342 residues long: Zinc transporter ZIP11 (342 aa).

Helical transmembrane passes span 12-32 (LLGT…VFIF), 44-64 (LGFA…APAV), 72-92 (GFGA…AAFV), 194-214 (IALL…AVGV), 263-285 (FWYG…FAVV), 290-307 (ILPY…YVVM), and 322-342 (LASW…VGLG).

The protein belongs to the ZIP transporter (TC 2.A.5) family. Highly expressed in the testes and portions of the digestive system including the stomach, ileum and cecum. In contrast, expressed at very low levels in liver, duodenum, jejunum, and colon.

The protein localises to the cell membrane. It localises to the nucleus. The protein resides in the cytoplasm. Its subcellular location is the golgi apparatus. The catalysed reaction is Zn(2+)(in) = Zn(2+)(out). The enzyme catalyses Cu(2+)(in) = Cu(2+)(out). Its function is as follows. Zinc importer that regulates cytosolic zinc concentration either via zinc influx from the extracellular compartment or efflux from intracellular organelles such as Golgi apparatus. May transport copper ions as well. The transport mechanism remains to be elucidated. This is Zinc transporter ZIP11 (Slc39a11) from Mus musculus (Mouse).